Here is a 501-residue protein sequence, read N- to C-terminus: Leukocyte receptor cluster member 9 (501 aa).

Disordered regions lie at residues 1-43, 61-86, 203-234, and 281-300; these read MGSR…PAPP, RQPHPGAPAPPGREAQPEAGAKKPPL, GQEAQAAPKRGSTRPLCTGHQEPGVEEPGELE, and QALGVPGGSAETTEAEWGPA. The C3H1-type zinc-finger motif lies at 40 to 67; the sequence is PAPPPACRFFLEGRCRFGARCRQPHPGA.

This chain is Leukocyte receptor cluster member 9 (LENG9), found in Homo sapiens (Human).